A 740-amino-acid chain; its full sequence is Ribosomal protein S6 kinase alpha-3 (740 aa).

The segment at 1 to 26 is disordered; the sequence is MPLAQLADPWQKMAVESPSDSAENGQ. The region spanning 68–327 is the Protein kinase 1 domain; that stretch reads FELLKVLGQG…VEEIKRHSFF (260 aa). Residues 74–82 and K100 each bind ATP; that span reads LGQGSFGKV. D193 (proton acceptor) is an active-site residue. S227 is modified (phosphoserine; by PDPK1). The AGC-kinase C-terminal domain occupies 328 to 397; that stretch reads STIDWNKLYR…VAITSDDESQ (70 aa). T365 carries the phosphothreonine modification. S369 and S375 each carry phosphoserine. S386 is subject to Phosphoserine; by autocatalysis and MAPKAPK2. A Phosphoserine modification is found at S415. The 258-residue stretch at 422 to 679 folds into the Protein kinase 2 domain; that stretch reads YEVKEDIGVG…AALVLRHPWI (258 aa). Residues 428–436 and K451 each bind ATP; that span reads IGVGSYSVC. Y529 is subject to Phosphotyrosine; by FGFR3. D539 serves as the catalytic Proton acceptor. Phosphoserine occurs at positions 556 and 715.

It belongs to the protein kinase superfamily. AGC Ser/Thr protein kinase family. S6 kinase subfamily. In terms of assembly, forms a complex with either MAPK1/ERK2 or MAPK3/ERK1 in quiescent cells. Transiently dissociates following mitogenic stimulation. Interacts with NFATC4, ETV1/ER81 and FGFR1. Requires Mg(2+) as cofactor. Post-translationally, activated by phosphorylation at Ser-227 by PDPK1. Autophosphorylated on Ser-386, as part of the activation process. May be phosphorylated at Thr-365 and Ser-369 by MAPK1/ERK2 and MAPK3/ERK1. Can also be activated via phosphorylation at Ser-386 by MAPKAPK2. N-terminal myristoylation results in an activated kinase in the absence of added growth factors. As to expression, intestine, thymus, lung, heart and brain.

It localises to the nucleus. The protein localises to the cytoplasm. The catalysed reaction is L-seryl-[protein] + ATP = O-phospho-L-seryl-[protein] + ADP + H(+). The enzyme catalyses L-threonyl-[protein] + ATP = O-phospho-L-threonyl-[protein] + ADP + H(+). Its activity is regulated as follows. Upon extracellular signal or mitogen stimulation, phosphorylated at Thr-577 in the C-terminal kinase domain (CTKD) by MAPK1/ERK2 and MAPK3/ERK1. The activated CTKD then autophosphorylates Ser-386, allowing binding of PDPK1, which in turn phosphorylates Ser-227 in the N-terminal kinase domain (NTDK) leading to the full activation of the protein and subsequent phosphorylation of the substrates by the NTKD. Functionally, serine/threonine-protein kinase that acts downstream of ERK (MAPK1/ERK2 and MAPK3/ERK1) signaling and mediates mitogenic and stress-induced activation of the transcription factors CREB1, ETV1/ER81 and NR4A1/NUR77, regulates translation through RPS6 and EIF4B phosphorylation, and mediates cellular proliferation, survival, and differentiation by modulating mTOR signaling and repressing pro-apoptotic function of BAD and DAPK1. In fibroblast, is required for EGF-stimulated phosphorylation of CREB1 and histone H3 at 'Ser-10', which results in the subsequent transcriptional activation of several immediate-early genes. In response to mitogenic stimulation (EGF and PMA), phosphorylates and activates NR4A1/NUR77 and ETV1/ER81 transcription factors and the cofactor CREBBP. Upon insulin-derived signal, acts indirectly on the transcription regulation of several genes by phosphorylating GSK3B at 'Ser-9' and inhibiting its activity. Phosphorylates RPS6 in response to serum or EGF via an mTOR-independent mechanism and promotes translation initiation by facilitating assembly of the preinitiation complex. In response to insulin, phosphorylates EIF4B, enhancing EIF4B affinity for the EIF3 complex and stimulating cap-dependent translation. Is involved in the mTOR nutrient-sensing pathway by directly phosphorylating TSC2 at 'Ser-1798', which potently inhibits TSC2 ability to suppress mTOR signaling, and mediates phosphorylation of RPTOR, which regulates mTORC1 activity and may promote rapamycin-sensitive signaling independently of the PI3K/AKT pathway. Mediates cell survival by phosphorylating the pro-apoptotic proteins BAD and DAPK1 and suppressing their pro-apoptotic function. Promotes the survival of hepatic stellate cells by phosphorylating CEBPB in response to the hepatotoxin carbon tetrachloride (CCl4). Is involved in cell cycle regulation by phosphorylating the CDK inhibitor CDKN1B, which promotes CDKN1B association with 14-3-3 proteins and prevents its translocation to the nucleus and inhibition of G1 progression. In LPS-stimulated dendritic cells, is involved in TLR4-induced macropinocytosis, and in myeloma cells, acts as effector of FGFR3-mediated transformation signaling, after direct phosphorylation at Tyr-529 by FGFR3. Negatively regulates EGF-induced MAPK1/3 phosphorylation via phosphorylation of SOS1. Phosphorylates SOS1 at 'Ser-1134' and 'Ser-1161' that create YWHAB and YWHAE binding sites and which contribute to the negative regulation of MAPK1/3 phosphorylation. Phosphorylates EPHA2 at 'Ser-897', the RPS6KA-EPHA2 signaling pathway controls cell migration. Acts as a regulator of osteoblast differentiation by mediating phosphorylation of ATF4, thereby promoting ATF4 transactivation activity. The protein is Ribosomal protein S6 kinase alpha-3 (Rps6ka3) of Mus musculus (Mouse).